The chain runs to 378 residues: Cytochrome b (378 aa).

4 consecutive transmembrane segments (helical) span residues F34–M54, W78–V99, W114–L134, and F179–L199. Heme b is bound by residues H84 and H98. Residues H183 and H197 each contribute to the heme b site. Residue H202 participates in a ubiquinone binding. Helical transmembrane passes span F227–N247, L289–H309, I321–A341, and Y348–L368.

It belongs to the cytochrome b family. As to quaternary structure, the main subunits of complex b-c1 are: cytochrome b, cytochrome c1 and the Rieske protein. The cofactor is heme b.

The protein localises to the mitochondrion inner membrane. In terms of biological role, component of the ubiquinol-cytochrome c reductase complex (complex III or cytochrome b-c1 complex) that is part of the mitochondrial respiratory chain. The b-c1 complex mediates electron transfer from ubiquinol to cytochrome c. Contributes to the generation of a proton gradient across the mitochondrial membrane that is then used for ATP synthesis. In Cochliomyia hominivorax (Primary screw-worm), this protein is Cytochrome b (MT-CYB).